The sequence spans 395 residues: Major capsid protein P3 (395 aa).

As to quaternary structure, homotrimer.

The protein resides in the virion. Its function is as follows. Major capsid protein self-assembles to form an icosahedral capsid with a pseudo T=25 symmetry, about 66 nm in diameter, and consisting of 240 capsid proteins trimers. The capsid encapsulates an inner membrane and the genomic dsDNA genome. The major coat protein P3 and two assembly factors (P10 and P17) are needed during the assembly of the virus particle inside the host cell, when the capsid protein multimers are capable of enclosing the host-derived membrane, containing the virus-encoded membrane-associated proteins. The chain is Major capsid protein P3 (III) from Acinetobacter calcoaceticus (Arthrobacter siderocapsulatus).